The sequence spans 101 residues: Acylphosphatase-1 (101 aa).

N-acetylserine is present on Ser-2. At Ser-2 the chain carries N-acetylalanine. Positions Ser-11–Lys-101 constitute an Acylphosphatase-like domain. Active-site residues include Arg-26 and Asn-44.

The protein belongs to the acylphosphatase family. In terms of tissue distribution, organ-common type isozyme is found in many different tissues.

It catalyses the reaction an acyl phosphate + H2O = a carboxylate + phosphate + H(+). The protein is Acylphosphatase-1 (ACYP1) of Sus scrofa (Pig).